The primary structure comprises 333 residues: Adenosine deaminase (333 aa).

Zn(2+) contacts are provided by H12 and H14. Substrate contacts are provided by H14, D16, and G170. H197 is a Zn(2+) binding site. E200 functions as the Proton donor in the catalytic mechanism. D278 contacts Zn(2+). D279 contacts substrate.

It belongs to the metallo-dependent hydrolases superfamily. Adenosine and AMP deaminases family. Adenosine deaminase subfamily. The cofactor is Zn(2+).

It catalyses the reaction adenosine + H2O + H(+) = inosine + NH4(+). The catalysed reaction is 2'-deoxyadenosine + H2O + H(+) = 2'-deoxyinosine + NH4(+). Catalyzes the hydrolytic deamination of adenosine and 2-deoxyadenosine. This Shigella dysenteriae serotype 1 (strain Sd197) protein is Adenosine deaminase.